The chain runs to 148 residues: MRCVTRTRNWWRRAARMPRAGSSAWWVAVCKQVCTRVGTYAVCWCSWNTGRFTGCPSWKDFWKPVGPALHVFNVKCEAQRGLKLTQPFTVACKIDPVLCKSGLGFPPQLFTGCVYLSTYTYPWQAQAECVRCPRDSNRCKRITPSACL.

The N-terminal stretch at 1-35 (MRCVTRTRNWWRRAARMPRAGSSAWWVAVCKQVCT) is a signal peptide.

The protein resides in the secreted. This is an uncharacterized protein from Homo sapiens (Human).